Consider the following 131-residue polypeptide: Mesogenin-1 (131 aa).

The tract at residues 22–79 is disordered; sequence EDRSFGDSASSPESESFDSACSSPDARSSPTAGCEHAEQQKPKVKMSMRRRMKASERE. Residues 27 to 45 show a composition bias toward low complexity; sequence GDSASSPESESFDSACSSP. A compositionally biased stretch (basic residues) spans 63–73; it reads PKVKMSMRRRM. The bHLH domain occupies 70-124; sequence RRRMKASEREKLRMRSLAEALHQLRDYLPPGYSRRGQPLTKIQTLKYTIQYIKEL.

Coexpression of ntl and spt is required for expression.

It localises to the nucleus. In terms of biological role, involved in specifying the paraxial, but not dorsal, mesoderm. May regulate the expression of T-box transcription factors required for mesoderm formation and differentiation. The polypeptide is Mesogenin-1 (msgn1) (Danio rerio (Zebrafish)).